We begin with the raw amino-acid sequence, 296 residues long: MASLKELRGRITGVKSTRKITNAMKMVAASKLRRAQMQAEAARPYADAMRRMMAELAMATRGEDAASLPRLLAGTGKDQTHLVVVLTSDRGLAGGFNANIVRSARQLVDTLVSEGKTVRILPVGRKGADILVRHYPEMITDRLAGSDGKDVGFDKATDIGSRIATMLDAGEIDRCTLVYNRFLNAMTQIPVQAPLVPLSVPENDNAAPDADTAQYEFEPDEATLLTQLLPRNLQVQIFSAMLESAAGEQGARMTAMDNASRNASKAIDRLSQKYNRTRQANITNDLIEIISGAEAV.

The protein belongs to the ATPase gamma chain family. As to quaternary structure, F-type ATPases have 2 components, CF(1) - the catalytic core - and CF(0) - the membrane proton channel. CF(1) has five subunits: alpha(3), beta(3), gamma(1), delta(1), epsilon(1). CF(0) has three main subunits: a, b and c.

Its subcellular location is the cell inner membrane. Produces ATP from ADP in the presence of a proton gradient across the membrane. The gamma chain is believed to be important in regulating ATPase activity and the flow of protons through the CF(0) complex. In Gluconobacter oxydans (strain 621H) (Gluconobacter suboxydans), this protein is ATP synthase gamma chain.